A 277-amino-acid polypeptide reads, in one-letter code: MKQLYGVIGNPIGHSLSPVMHNDAFEHLNMDAHYHAFLVKEEVLGEAVRGLKALGISGFNVTTPHKVAIMDYLDEIDPLAKQIGAVNTVVHKDGKLIGYNTDGIGFVRALQSISSEPLQEKRILLLGAGGASRAIYFSLADAGVKEIDVANRTVDKAKELIAACTATVHSVALSLEKATKEQGSYDIIIQTTTIGMHPRVEHTPLQISSLKKGTIVSDIIYNPFETKILCEAKEQGAIIQNGIDMFVYQGALAFEMWTGCVPNIERMKQLVIRKLGG.

Shikimate-binding positions include 15 to 17 and Thr62; that span reads SLS. Lys66 serves as the catalytic Proton acceptor. Residues Asn87 and Asp102 each contribute to the shikimate site. Residues 127 to 131, 151 to 156, and Ile219 contribute to the NADP(+) site; these read GAGGA and NRTVDK. Tyr221 provides a ligand contact to shikimate. Gly242 is an NADP(+) binding site.

This sequence belongs to the shikimate dehydrogenase family. As to quaternary structure, homodimer.

The catalysed reaction is shikimate + NADP(+) = 3-dehydroshikimate + NADPH + H(+). The protein operates within metabolic intermediate biosynthesis; chorismate biosynthesis; chorismate from D-erythrose 4-phosphate and phosphoenolpyruvate: step 4/7. Involved in the biosynthesis of the chorismate, which leads to the biosynthesis of aromatic amino acids. Catalyzes the reversible NADPH linked reduction of 3-dehydroshikimate (DHSA) to yield shikimate (SA). The sequence is that of Shikimate dehydrogenase (NADP(+)) from Bacillus thuringiensis subsp. konkukian (strain 97-27).